We begin with the raw amino-acid sequence, 717 residues long: ATP-dependent RNA helicase homolog DQX1 (717 aa).

The Helicase ATP-binding domain occupies 57–225 (QLESNPTGVV…WGNPPIVHIP (169 aa)). Residue 70–77 (GEPGSGKS) participates in ATP binding. The DEAQ box motif lies at 170-173 (DEAQ). The Helicase C-terminal domain maps to 248–447 (ACQAVLELCR…ALMQALEDLD (200 aa)). The segment at 694-717 (GMADSTAGSKSSSAQEFRDPCVLQ) is disordered. The segment covering 699 to 708 (TAGSKSSSAQ) has biased composition (polar residues).

The protein resides in the nucleus. In terms of biological role, might be involved in RNA metabolism; it is missing helicase motif III and may not have helicase activity. The sequence is that of ATP-dependent RNA helicase homolog DQX1 (DQX1) from Homo sapiens (Human).